Consider the following 542-residue polypeptide: MSSSSSSPRETYEEDREYESQAKRLKTEEGEIDYSAEEGENRREATPRGGGDGGGGGRSFSQPEAGGSHHKVSVSPVVHVRGLCESVVEADLVEALEKFGTICYVMMMPFKRQALVEFENIDSAKECVTFAADEPVYIAGQQAFFNYSTSKRITRPGNTDDPSGGNKVLLLSIQNPLYPITVDVLYTVCNPVGKVQRIVIFKRNGIQAMVEFESVLCAQKAKAALNGADIYAGCCTLKIEYARPTRLNVIRNDNDSWDYTKPYLGRRDRGKGRQRQAILGEHPSSFRHDGYGSHGPLLPLPSRYRMGSRDTPELVAYPLPQASSSYMHGGNPSGSVVMVSGLHQLKMNCSRVFNLFCLYGNIEKVKFMKTIPGTALVEMGDEYAVERAVTHLNNVKLFGKRLNVCVSKQHSVVPSQIFELEDGTSSYKDFAMSKNNRFTSAGQASKNIIQPPSCVLHYYNVPLCVTEETFTKLCNDHEVLTFIKYKVFDAKPSAKTLSGLLEWECKTDAVEALTALNHYQIRVPNGSNPYTLKLCFSTSSHL.

Positions 1 to 71 (MSSSSSSPRE…QPEAGGSHHK (71 aa)) are disordered. Residues 18–29 (YESQAKRLKTEE) show a composition bias toward basic and acidic residues. Lys26 is covalently cross-linked (Glycyl lysine isopeptide (Lys-Gly) (interchain with G-Cter in SUMO2)). A Phosphoserine modification is found at Ser35. Thr46 bears the Phosphothreonine mark. Residues 48–58 (RGGGDGGGGGR) are compositionally biased toward gly residues. A phosphoserine mark is found at Ser59, Ser68, and Ser75. RRM domains are found at residues 76–150 (PVVH…YSTS), 166–244 (NKVL…YARP), and 335–409 (SVVM…VSKQ). A Glycyl lysine isopeptide (Lys-Gly) (interchain with G-Cter in SUMO2) cross-link involves residue Lys491.

As to quaternary structure, interacts with HNRNPL. In terms of tissue distribution, widely expressed. Detected in bone marrow stroma cells, skeletal muscle, heart, placenta, pancreas, kidney and lung.

Its function is as follows. RNA-binding protein that functions as a regulator of alternative splicing for multiple target mRNAs, including PTPRC/CD45 and STAT5A. Required for alternative splicing of PTPRC. This chain is Heterogeneous nuclear ribonucleoprotein L-like (HNRNPLL), found in Homo sapiens (Human).